The chain runs to 508 residues: Photosystem II CP47 reaction center protein (508 aa).

6 consecutive transmembrane segments (helical) span residues 21–36, 101–115, 140–156, 203–218, 237–252, and 457–472; these read AVHI…WAGS, IILS…IWHW, GIHL…FGAF, IAAG…FHLS, VLSS…AFIV, and CFAL…HGAR.

It belongs to the PsbB/PsbC family. PsbB subfamily. As to quaternary structure, PSII is composed of 1 copy each of membrane proteins PsbA, PsbB, PsbC, PsbD, PsbE, PsbF, PsbH, PsbI, PsbJ, PsbK, PsbL, PsbM, PsbT, PsbX, PsbY, PsbZ, Psb30/Ycf12, at least 3 peripheral proteins of the oxygen-evolving complex and a large number of cofactors. It forms dimeric complexes. It depends on Binds multiple chlorophylls. PSII binds additional chlorophylls, carotenoids and specific lipids. as a cofactor.

It localises to the plastid. The protein resides in the chloroplast thylakoid membrane. One of the components of the core complex of photosystem II (PSII). It binds chlorophyll and helps catalyze the primary light-induced photochemical processes of PSII. PSII is a light-driven water:plastoquinone oxidoreductase, using light energy to abstract electrons from H(2)O, generating O(2) and a proton gradient subsequently used for ATP formation. This is Photosystem II CP47 reaction center protein from Chara vulgaris (Common stonewort).